A 413-amino-acid chain; its full sequence is Serine hydroxymethyltransferase (413 aa).

(6S)-5,6,7,8-tetrahydrofolate contacts are provided by residues L119 and 123–125 (GHL). Position 228 is an N6-(pyridoxal phosphate)lysine (K228). E243 is a binding site for (6S)-5,6,7,8-tetrahydrofolate.

It belongs to the SHMT family. As to quaternary structure, homodimer. Pyridoxal 5'-phosphate is required as a cofactor.

Its subcellular location is the cytoplasm. The enzyme catalyses (6R)-5,10-methylene-5,6,7,8-tetrahydrofolate + glycine + H2O = (6S)-5,6,7,8-tetrahydrofolate + L-serine. It participates in one-carbon metabolism; tetrahydrofolate interconversion. It functions in the pathway amino-acid biosynthesis; glycine biosynthesis; glycine from L-serine: step 1/1. Its function is as follows. Catalyzes the reversible interconversion of serine and glycine with tetrahydrofolate (THF) serving as the one-carbon carrier. This reaction serves as the major source of one-carbon groups required for the biosynthesis of purines, thymidylate, methionine, and other important biomolecules. Also exhibits THF-independent aldolase activity toward beta-hydroxyamino acids, producing glycine and aldehydes, via a retro-aldol mechanism. The chain is Serine hydroxymethyltransferase from Desulforamulus reducens (strain ATCC BAA-1160 / DSM 100696 / MI-1) (Desulfotomaculum reducens).